Consider the following 147-residue polypeptide: Hemoglobin subunit gamma-1 (147 aa).

The Globin domain occupies 3–147 (NFTAEDKAAI…VASALGSRYH (145 aa)). A Phosphothreonine modification is found at threonine 13. A phosphoserine mark is found at serine 45, serine 51, and serine 53. At lysine 60 the chain carries N6-acetyllysine. A heme b-binding site is contributed by histidine 64. Lysine 83 carries the N6-acetyllysine modification. Histidine 93 serves as a coordination point for heme b. Cysteine 94 carries the S-nitrosocysteine modification. The residue at position 140 (serine 140) is a Phosphoserine.

The protein belongs to the globin family. Heterotetramer of two alpha chains and two gamma chains in fetal hemoglobin (Hb F). Red blood cells.

Gamma chains make up the fetal hemoglobin F, in combination with alpha chains. This Plecturocebus moloch (Dusky titi monkey) protein is Hemoglobin subunit gamma-1 (HBG1).